A 468-amino-acid polypeptide reads, in one-letter code: Hepatocyte nuclear factor 3-alpha (468 aa).

The fork-head DNA-binding region spans 169–260; the sequence is AKPPYSYISL…GNMFENGCYL (92 aa). The tract at residues 251–288 is essential for DNA binding; that stretch reads GNMFENGCYLRRQKRFKCEKQPGAGGGSGGGGSKGGPE. Residues 269-396 form a disordered region; the sequence is EKQPGAGGGS…DPHYSFNHPF (128 aa). Positions 273-285 are enriched in gly residues; the sequence is GAGGGSGGGGSKG. Phosphoserine occurs at positions 303 and 327. Composition is skewed to low complexity over residues 318–328 and 347–365; these read GAPAPGPAASP and SPAS…ALAS.

As to quaternary structure, binds DNA as a monomer. Interacts with FOXA2. Interacts with NKX2-1. Interacts with HDAC7. Interacts with the histone H3-H4 heterodimer. Associates with nucleosomes containing histone H2A. Interacts with AR. Interacts with NR0B2. Restricted mainly to endoderm-derived tissues (lung, liver, stomach, and small intestine). Expressed in the prostate.

The protein localises to the nucleus. In terms of biological role, transcription factor that is involved in embryonic development, establishment of tissue-specific gene expression and regulation of gene expression in differentiated tissues. Is thought to act as a 'pioneer' factor opening the compacted chromatin for other proteins through interactions with nucleosomal core histones and thereby replacing linker histones at target enhancer and/or promoter sites. Binds DNA with the consensus sequence 5'-[AC]A[AT]T[AG]TT[GT][AG][CT]T[CT]-3'. Proposed to play a role in translating the epigenetic signatures into cell type-specific enhancer-driven transcriptional programs. Involved in the development of multiple endoderm-derived organ systems such as the liver, pancreas, lungs and prostate; FOXA1 and FOXA2 seem to have at least in part redundant roles. Plays a role in prostate morphogenesis and epithelial cell differentiation. FOXA1 and FOXA2 are essential for hepatic specification. FOXA1 and FOXA2 are required for morphogenesis and cell differentiation during formation of the lung. FOXA1 and FOXA2 are involved in bile duct formation; they positively regulate the binding of glucocorticoid receptor/NR3C1 to the IL6 promoter. FOXA1 and FOXA2 regulate multiple phases of midbrain dopaminergic neuron development; they regulate expression of NEUROG2 at the beginning of mDA neurogenesis and of NR4A2 and EN1 in immature mDA neurons. Modulates the transcriptional activity of nuclear hormone receptors. Is involved in ESR1-mediated transcription. Inhibits NKX2-1-mediated transcription from the SFTPC promoter in lung epithel independently from DNA-binding. Involved in regulation of apoptosis. Involved in cell cycle regulation. Originally described as a transcription activator for a number of liver genes such as AFP, albumin, tyrosine aminotransferase, PEPCK, etc. Interacts with the cis-acting regulatory regions of these genes. Involved in glucose homeostasis; activates the GCG promoter. The chain is Hepatocyte nuclear factor 3-alpha (Foxa1) from Mus musculus (Mouse).